A 286-amino-acid polypeptide reads, in one-letter code: Shikimate dehydrogenase (NADP(+)) (286 aa).

Residues 19-21 (SVS) and Thr-66 contribute to the shikimate site. Lys-70 functions as the Proton acceptor in the catalytic mechanism. 2 residues coordinate shikimate: Asn-91 and Asp-106. NADP(+)-binding positions include 130-134 (GAGGS) and Ala-225. Tyr-227 contributes to the shikimate binding site. Gly-248 is a binding site for NADP(+).

The protein belongs to the shikimate dehydrogenase family. As to quaternary structure, homodimer.

It carries out the reaction shikimate + NADP(+) = 3-dehydroshikimate + NADPH + H(+). It functions in the pathway metabolic intermediate biosynthesis; chorismate biosynthesis; chorismate from D-erythrose 4-phosphate and phosphoenolpyruvate: step 4/7. Its function is as follows. Involved in the biosynthesis of the chorismate, which leads to the biosynthesis of aromatic amino acids. Catalyzes the reversible NADPH linked reduction of 3-dehydroshikimate (DHSA) to yield shikimate (SA). The polypeptide is Shikimate dehydrogenase (NADP(+)) (Dehalococcoides mccartyi (strain ATCC BAA-2100 / JCM 16839 / KCTC 5957 / BAV1)).